A 196-amino-acid polypeptide reads, in one-letter code: Probable malonic semialdehyde reductase RutE (196 aa).

The protein belongs to the nitroreductase family. HadB/RutE subfamily. It depends on FMN as a cofactor.

It carries out the reaction 3-hydroxypropanoate + NADP(+) = 3-oxopropanoate + NADPH + H(+). Functionally, may reduce toxic product malonic semialdehyde to 3-hydroxypropionic acid, which is excreted. The protein is Probable malonic semialdehyde reductase RutE of Klebsiella pneumoniae (strain 342).